We begin with the raw amino-acid sequence, 343 residues long: Protein RecA (343 aa).

An ATP-binding site is contributed by 65-72; the sequence is GPESSGKT.

The protein belongs to the RecA family.

The protein localises to the cytoplasm. Can catalyze the hydrolysis of ATP in the presence of single-stranded DNA, the ATP-dependent uptake of single-stranded DNA by duplex DNA, and the ATP-dependent hybridization of homologous single-stranded DNAs. It interacts with LexA causing its activation and leading to its autocatalytic cleavage. In Xanthomonas campestris pv. campestris (strain 8004), this protein is Protein RecA.